The sequence spans 557 residues: Probable protein kinase UbiB (557 aa).

The Protein kinase domain maps to 121-509 (SFDTVPLASA…RKLQTRVVTA (389 aa)). ATP-binding positions include 127 to 135 (LASASIAQV) and Lys154. Asp289 functions as the Proton acceptor in the catalytic mechanism. 2 helical membrane passes run 506 to 526 (VVTA…YGLH) and 535 to 555 (VPVW…VAWL).

Belongs to the ABC1 family. UbiB subfamily.

The protein localises to the cell inner membrane. The protein operates within cofactor biosynthesis; ubiquinone biosynthesis [regulation]. Is probably a protein kinase regulator of UbiI activity which is involved in aerobic coenzyme Q (ubiquinone) biosynthesis. The sequence is that of Probable protein kinase UbiB from Xanthomonas euvesicatoria pv. vesicatoria (strain 85-10) (Xanthomonas campestris pv. vesicatoria).